Consider the following 498-residue polypeptide: Hexokinase-1 (498 aa).

The chain crosses the membrane as a helical span at residues 4–24 (VTVGAAVVGAAAVCAVAALIV). The region spanning 35–488 (GRAMAILREF…SGIGAALLRA (454 aa)) is the Hexokinase domain. The tract at residues 89-228 (QLVMKLGVFY…VLDMRVSALV (140 aa)) is hexokinase small subdomain. ADP-binding residues include Gly-104, Thr-105, and Asn-106. Positions 194, 195, 229, and 230 each coordinate D-glucose. Positions 229–477 (NDTVGTLAGG…TSIVFVHSND (249 aa)) are hexokinase large subdomain. Thr-253 is a binding site for ADP. Asn-256, Glu-284, and Glu-315 together coordinate D-glucose. Gly-442 is a binding site for ADP.

Belongs to the hexokinase family. Expressed in young and mature leaves, stems, roots, stolons, and developing and mature tubers.

The protein localises to the plastid. It localises to the chloroplast outer membrane. The catalysed reaction is a D-hexose + ATP = a D-hexose 6-phosphate + ADP + H(+). It catalyses the reaction D-fructose + ATP = D-fructose 6-phosphate + ADP + H(+). The enzyme catalyses D-glucose + ATP = D-glucose 6-phosphate + ADP + H(+). Its pathway is carbohydrate metabolism; hexose metabolism. The protein operates within carbohydrate degradation; glycolysis; D-glyceraldehyde 3-phosphate and glycerone phosphate from D-glucose: step 1/4. Its function is as follows. Fructose and glucose phosphorylating enzyme. May be involved in the phosphorylation of glucose during the export from plastids to cytosol. Seems neither to be involved in cell sugar sensing nor in carbohydrate metabolism in tuber. The sequence is that of Hexokinase-1 (HXK1) from Solanum tuberosum (Potato).